The chain runs to 494 residues: Glutamyl-tRNA(Gln) amidotransferase subunit A (494 aa).

Catalysis depends on charge relay system residues lysine 72 and serine 147. Residue serine 171 is the Acyl-ester intermediate of the active site.

It belongs to the amidase family. GatA subfamily. Heterotrimer of A, B and C subunits.

It carries out the reaction L-glutamyl-tRNA(Gln) + L-glutamine + ATP + H2O = L-glutaminyl-tRNA(Gln) + L-glutamate + ADP + phosphate + H(+). Its function is as follows. Allows the formation of correctly charged Gln-tRNA(Gln) through the transamidation of misacylated Glu-tRNA(Gln) in organisms which lack glutaminyl-tRNA synthetase. The reaction takes place in the presence of glutamine and ATP through an activated gamma-phospho-Glu-tRNA(Gln). The sequence is that of Glutamyl-tRNA(Gln) amidotransferase subunit A from Methylacidiphilum infernorum (isolate V4) (Methylokorus infernorum (strain V4)).